A 140-amino-acid chain; its full sequence is Large ribosomal subunit protein uL13 (140 aa).

This sequence belongs to the universal ribosomal protein uL13 family. As to quaternary structure, part of the 50S ribosomal subunit.

Functionally, this protein is one of the early assembly proteins of the 50S ribosomal subunit, although it is not seen to bind rRNA by itself. It is important during the early stages of 50S assembly. This Methanosarcina mazei (strain ATCC BAA-159 / DSM 3647 / Goe1 / Go1 / JCM 11833 / OCM 88) (Methanosarcina frisia) protein is Large ribosomal subunit protein uL13.